A 49-amino-acid polypeptide reads, in one-letter code: Large ribosomal subunit protein bL33 (49 aa).

The protein belongs to the bacterial ribosomal protein bL33 family.

In Heliobacterium modesticaldum (strain ATCC 51547 / Ice1), this protein is Large ribosomal subunit protein bL33.